Consider the following 132-residue polypeptide: MHLRLTLVALGAAYVCANAVESTMNRLVAETLTLLSTHQTLLIGDGNLMIPTPQHTNHQLCIEEVFQGIDTLKNQTAQGDAVKKIFRNLSLIKEYIDLQKRKCGGERWRVKQFLDYLQVFLGVINTEWTMES.

The N-terminal stretch at M1 to A19 is a signal peptide. 2 N-linked (GlcNAc...) asparagine glycosylation sites follow: N74 and N88.

The protein belongs to the IL-5 family. As to quaternary structure, homodimer; disulfide-linked. Interacts with IL5RA. Interacts with CSF2RB.

The protein localises to the secreted. Functionally, homodimeric cytokine expressed predominantly by T-lymphocytes and NK cells that plays an important role in the survival, differentiation, and chemotaxis of eosinophils. Also acts on activated and resting B-cells to induce immunoglobulin production, growth, and differentiation. Mechanistically, exerts its biological effects through a receptor composed of IL5RA subunit and the cytokine receptor common subunit beta/CSF2RB. Binding to the receptor leads to activation of various kinases including LYN, SYK and JAK2 and thereby propagates signals through the RAS-MAPK and JAK-STAT5 pathways respectively. The protein is Interleukin-5 (IL5) of Ovis aries (Sheep).